The sequence spans 241 residues: Glucosamine-6-phosphate deaminase (241 aa).

Residue Asp67 is the Proton acceptor; for enolization step of the active site. The active-site For ring-opening step is the Asn136. His138 functions as the Proton acceptor; for ring-opening step in the catalytic mechanism. The For ring-opening step role is filled by Glu143.

It belongs to the glucosamine/galactosamine-6-phosphate isomerase family. NagB subfamily.

It carries out the reaction alpha-D-glucosamine 6-phosphate + H2O = beta-D-fructose 6-phosphate + NH4(+). The protein operates within amino-sugar metabolism; N-acetylneuraminate degradation; D-fructose 6-phosphate from N-acetylneuraminate: step 5/5. Its function is as follows. Catalyzes the reversible isomerization-deamination of glucosamine 6-phosphate (GlcN6P) to form fructose 6-phosphate (Fru6P) and ammonium ion. The protein is Glucosamine-6-phosphate deaminase of Bacillus velezensis (strain DSM 23117 / BGSC 10A6 / LMG 26770 / FZB42) (Bacillus amyloliquefaciens subsp. plantarum).